The following is a 52-amino-acid chain: uncharacterized protein (52 aa).

This is an uncharacterized protein from Saccharomyces cerevisiae (strain ATCC 204508 / S288c) (Baker's yeast).